The sequence spans 596 residues: Probable tripeptidyl-peptidase SED2 (596 aa).

A signal peptide spans 1–16 (MRLLKFVCLLASVAAA). A propeptide spans 17–203 (KPTPGASHKV…LESMSVEEFA (187 aa)) (removed in mature form). In terms of domain architecture, Peptidase S53 spans 210–596 (LVTTACLREL…NFQALTKVLP (387 aa)). Asn265 carries N-linked (GlcNAc...) asparagine glycosylation. Catalysis depends on charge relay system residues Glu286 and Asp290. N-linked (GlcNAc...) asparagine glycosylation occurs at Asn403. The active-site Charge relay system is Ser501. Positions 543 and 544 each coordinate Ca(2+). The N-linked (GlcNAc...) asparagine glycan is linked to Asn572. Positions 576 and 578 each coordinate Ca(2+).

Ca(2+) is required as a cofactor.

It is found in the secreted. Its subcellular location is the extracellular space. The enzyme catalyses Release of an N-terminal tripeptide from a polypeptide.. Its function is as follows. Secreted tripeptidyl-peptidase which degrades proteins at acidic pHs and is involved in virulence. This is Probable tripeptidyl-peptidase SED2 (SED2) from Trichophyton verrucosum (strain HKI 0517).